A 1290-amino-acid chain; its full sequence is Alpha-factor-transporting ATPase (1290 aa).

The Cytoplasmic portion of the chain corresponds to 1–25; sequence MNFLSFKTTKHYHIFRYVNIRNDYR. A helical membrane pass occupies residues 26–46; that stretch reads LLMIMIIGTVATGLVPAITSI. The ABC transmembrane type-1 1 domain occupies 27 to 319; sequence LMIMIIGTVA…TLHQIVVLQK (293 aa). The Extracellular portion of the chain corresponds to 47 to 75; that stretch reads LTGRVFDLLSVFVANGSHQGLYSQLVQRS. N-linked (GlcNAc...) asparagine glycosylation occurs at Asn61. Residues 76–96 form a helical membrane-spanning segment; the sequence is MAVMALGAASVPVMWLSLTSW. At 97 to 150 the chain is on the cytoplasmic side; sequence MHIGERQGFRIRSQILEAYLEEKPMEWYDNNEKLLGDFTQINRCVEELRSSSAE. Residues 151 to 171 traverse the membrane as a helical segment; the sequence is ASAITFQNLVAICALLGTSFY. The Extracellular portion of the chain corresponds to 172-173; sequence YS. The chain crosses the membrane as a helical span at residues 174-194; sequence WSLTLIILCSSPIITFFAVVF. Residues 195-262 are Cytoplasmic-facing; the sequence is SRMIHVYSEK…SCFFVAANAG (68 aa). Residues 263–283 traverse the membrane as a helical segment; sequence ILRFLTLTMFVQGFWFGSAMI. At 284-296 the chain is on the extracellular side; the sequence is KKGKLNINDVITC. A helical membrane pass occupies residues 297-317; the sequence is FHSCIMLGSTLNNTLHQIVVL. The Cytoplasmic portion of the chain corresponds to 318–715; the sequence is QKGGVAMEKI…RMIKSIRYKK (398 aa). The 247-residue stretch at 357-603 folds into the ABC transporter 1 domain; the sequence is LTFANVSFSY…PTTTFSTWYH (247 aa). Residue 392–399 participates in ATP binding; it reads GKSGSGKS. A helical membrane pass occupies residues 716 to 736; sequence ILILGLLCSLIAGATNPVFSY. Positions 717-1007 constitute an ABC transmembrane type-1 2 domain; sequence LILGLLCSLI…LVSQIPDISR (291 aa). At 737 to 763 the chain is on the extracellular side; the sequence is TFSFLLEGIVPSTDGKTGSSHYLAKWS. Residues 764–784 traverse the membrane as a helical segment; that stretch reads LLVLGVAAADGIFNFAKGFLL. At 785 to 838 the chain is on the cytoplasmic side; sequence DCCSEYWVMDLRNEVMEKLTRKNMDWFSGENNKASEISALVLNDLRDLRSLVSE. The helical transmembrane segment at 839–859 threads the bilayer; it reads FLSAMTSFVTVSTIGLIWALV. Topologically, residues 860-865 are extracellular; the sequence is SGWKLS. The helical transmembrane segment at 866-886 threads the bilayer; that stretch reads LVCISMFPLIIIFSAIYGGIL. Over 887–945 the chain is Cytoplasmic; sequence QKCETDYKTSVAQLENCLYQIVTNIKTIKCLQAEFHFQLTYHDLKIKMQQIASKRAIAT. The helical transmembrane segment at 946–966 threads the bilayer; the sequence is GFGISMTNMIVMCIQAIIYYY. The Extracellular portion of the chain corresponds to 967-981; it reads GLKLVMIHEYTSKEM. A helical transmembrane segment spans residues 982–1002; sequence FTTFTLLLFTIMSCTSLVSQI. Residues 1003–1290 are Cytoplasmic-facing; sequence PDISRGQRAA…LFQIVSNQSS (288 aa). Residue Lys1022 forms a Glycyl lysine isopeptide (Lys-Gly) (interchain with G-Cter in ubiquitin) linkage. The ABC transporter 2 domain occupies 1052–1287; the sequence is VSIQNLTFAY…RGELFQIVSN (236 aa). Residue 1087–1094 participates in ATP binding; sequence GESGTGKS.

Belongs to the ABC transporter superfamily. Alpha-factor sex pheromone exporter (TC 3.A.1.206) family. Degraded via the ubiquitin system.

Its subcellular location is the membrane. It catalyses the reaction an [alpha-factor](in) + ATP + H2O = an [alpha-factor](out) + ADP + phosphate + H(+). STE6 is required in yeast MATA cells for production of A-factor pheromone. STE6 is involved in the transport of the farnesyl-derivation of the A-factor pheromone. This is Alpha-factor-transporting ATPase (STE6) from Saccharomyces cerevisiae (strain ATCC 204508 / S288c) (Baker's yeast).